We begin with the raw amino-acid sequence, 140 residues long: FLYWCH family member 2 (140 aa).

Disordered regions lie at residues M1–F39 and H84–L140. A Phosphoserine modification is found at S21. The segment covering P98–D114 has biased composition (basic and acidic residues). Residues A118–E127 are compositionally biased toward low complexity.

In Homo sapiens (Human), this protein is FLYWCH family member 2 (FLYWCH2).